A 532-amino-acid chain; its full sequence is D-arabinono-1,4-lactone oxidase (532 aa).

Residues 25–199 (YSARPRLYFQ…VRATIRVVPA (175 aa)) form the FAD-binding PCMH-type domain. Pros-8alpha-FAD histidine is present on His62.

It belongs to the oxygen-dependent FAD-linked oxidoreductase family. FAD serves as cofactor.

It is found in the mitochondrion membrane. The enzyme catalyses D-arabinono-1,4-lactone + O2 = dehydro-D-arabinono-1,4-lactone + H2O2 + H(+). Its pathway is cofactor biosynthesis; D-erythroascorbate biosynthesis; dehydro-D-arabinono-1,4-lactone from D-arabinose: step 2/2. This chain is D-arabinono-1,4-lactone oxidase (ALO1), found in Eremothecium gossypii (strain ATCC 10895 / CBS 109.51 / FGSC 9923 / NRRL Y-1056) (Yeast).